Here is a 122-residue protein sequence, read N- to C-terminus: Small ribosomal subunit protein uS13 (122 aa).

The interval proline 97 to lysine 122 is disordered.

It belongs to the universal ribosomal protein uS13 family. As to quaternary structure, part of the 30S ribosomal subunit. Forms a loose heterodimer with protein S19. Forms two bridges to the 50S subunit in the 70S ribosome.

In terms of biological role, located at the top of the head of the 30S subunit, it contacts several helices of the 16S rRNA. In the 70S ribosome it contacts the 23S rRNA (bridge B1a) and protein L5 of the 50S subunit (bridge B1b), connecting the 2 subunits; these bridges are implicated in subunit movement. Contacts the tRNAs in the A and P-sites. In Geobacter metallireducens (strain ATCC 53774 / DSM 7210 / GS-15), this protein is Small ribosomal subunit protein uS13.